Consider the following 147-residue polypeptide: Large ribosomal subunit protein uL13 (147 aa).

It belongs to the universal ribosomal protein uL13 family. In terms of assembly, part of the 50S ribosomal subunit.

Functionally, this protein is one of the early assembly proteins of the 50S ribosomal subunit, although it is not seen to bind rRNA by itself. It is important during the early stages of 50S assembly. This is Large ribosomal subunit protein uL13 from Streptomyces avermitilis (strain ATCC 31267 / DSM 46492 / JCM 5070 / NBRC 14893 / NCIMB 12804 / NRRL 8165 / MA-4680).